Reading from the N-terminus, the 70-residue chain is UPF0434 protein MCA0634 (70 aa).

The protein belongs to the UPF0434 family.

This chain is UPF0434 protein MCA0634, found in Methylococcus capsulatus (strain ATCC 33009 / NCIMB 11132 / Bath).